The chain runs to 629 residues: Extracellular metalloproteinase 10 (629 aa).

An N-terminal signal peptide occupies residues 1 to 19; the sequence is MHGLLLAAGLLSLPLYTIA. The propeptide occupies 20–240; that stretch reads HTQPSGALSR…VHNVVDYVAH (221 aa). N-linked (GlcNAc...) asparagine glycans are attached at residues N281 and N331. H424 lines the Zn(2+) pocket. E425 is a catalytic residue. H428 lines the Zn(2+) pocket. N469 and N617 each carry an N-linked (GlcNAc...) asparagine glycan.

It belongs to the peptidase M36 family. It depends on Zn(2+) as a cofactor.

The protein resides in the secreted. Secreted metalloproteinase that allows assimilation of proteinaceous substrates and probably acts as a virulence factor. This Coccidioides posadasii (strain C735) (Valley fever fungus) protein is Extracellular metalloproteinase 10 (MEP10).